Reading from the N-terminus, the 163-residue chain is Disulfide bond formation protein B (163 aa).

The Cytoplasmic segment spans residues 1–9; that stretch reads MRLASPRSL. The helical transmembrane segment at 10–26 threads the bilayer; the sequence is FVIAFLGSALLIAIALY. At 27 to 44 the chain is on the periplasmic side; it reads MEHVMGLAPCPLCIVQRI. Cysteines 36 and 39 form a disulfide. Residues 45–61 form a helical membrane-spanning segment; the sequence is CVIGFGLVCLVAAIHGP. At 62-67 the chain is on the cytoplasmic side; sequence AKVGRR. A helical membrane pass occupies residues 68 to 85; sequence VYAAIAALFVAAGAATAI. Residues 86–142 are Periplasmic-facing; the sequence is RQIWLQSVPADQLPSCLPSLEYMMEALPFQEIARLVLHGTAECAEVSWTMLGMSIPE. A disulfide bridge links Cys101 with Cys128. The chain crosses the membrane as a helical span at residues 143–161; the sequence is WSLLGFIGMAIVCLWQLLR. Topologically, residues 162–163 are cytoplasmic; it reads RD.

The protein belongs to the DsbB family.

Its subcellular location is the cell inner membrane. Functionally, required for disulfide bond formation in some periplasmic proteins. Acts by oxidizing the DsbA protein. In Stutzerimonas stutzeri (strain A1501) (Pseudomonas stutzeri), this protein is Disulfide bond formation protein B.